The primary structure comprises 367 residues: Innexin inx4 (367 aa).

The Cytoplasmic segment spans residues 1–21 (MYAAVKPLSKYLQFKSVHIYD). Residues 22–42 (AIFTLHSKVTVALLLACTFLL) form a helical membrane-spanning segment. At 43–110 (SSKQYFGDPI…PENRNYITYY (68 aa)) the chain is on the extracellular side. Residues 111 to 131 (QWVVLVLLLESFVFYMPAFLW) traverse the membrane as a helical segment. At 132–186 (KIWEGGRLKHLCDDFHKMAVCKDKSRTHLRVLVNYFSSDYKETHFRYFVSYVFCE) the chain is on the cytoplasmic side. Residues 187–207 (ILNLSISILNFLLLDVFFGGF) form a helical membrane-spanning segment. The Extracellular segment spans residues 208-268 (WGRYRNALLS…LLPLNILNEK (61 aa)). A helical transmembrane segment spans residues 269–289 (IFAFLWIWFILVAMLISLKFL). Residues 290–367 (YRLATVLYPG…IKIPPGADKI (78 aa)) lie on the Cytoplasmic side of the membrane.

Belongs to the pannexin family. Expressed in nurse cells and oocyte during oogenesis. Uniform expression in imaginal wing disk and low expression in developing imaginal CNS. Expressed in embryonic pole cells and primordial germ cells.

It is found in the cell membrane. The protein localises to the cell junction. Its subcellular location is the gap junction. Functionally, structural component of the gap junctions in germline cells. Required for differentiation and survival of germline cysts in females and of spermatogonia in males; gap junctional communication between spermatogonia and somatic cyst cells may be required for normal differentiation and survival of spermatogonia. In Drosophila melanogaster (Fruit fly), this protein is Innexin inx4 (zpg).